Consider the following 566-residue polypeptide: Tetratricopeptide repeat protein 34 (566 aa).

The segment at 1 to 29 (MLQRSPRAGPSRAQGRREAAETGGPTTQE) is disordered. TPR repeat units lie at residues 50 to 83 (EASR…RPQA), 178 to 211 (SESL…EPGN), 212 to 245 (VQAL…GPGT), 306 to 339 (PHWH…APTS), 341 to 373 (AARA…DAPD), 424 to 457 (ACHL…ALGD), 464 to 497 (AEDF…APSL), and 512 to 545 (ARMF…DPDH).

This is Tetratricopeptide repeat protein 34 (TTC34) from Homo sapiens (Human).